A 300-amino-acid chain; its full sequence is E3 ubiquitin-protein ligase RNF212B (300 aa).

The RING-type zinc-finger motif lies at 6-40 (CNQCFRKDGAHFFVTSCGHIFCKKCVTLEKCAVCG). The stretch at 87–124 (LLIAFYKHRITKLETAMQEAQQALVSQDKELSVLRKEN) forms a coiled coil. The disordered stretch occupies residues 141 to 232 (YQGSRSITPR…SYRTSSASSG (92 aa)). The span at 155 to 165 (TSPSQSVTPRP) shows a compositional bias: polar residues. Residues 166 to 182 (SFQHSSQVVSRSSSAES) show a composition bias toward low complexity. Over residues 191–200 (GSLGQGGRGL) the composition is skewed to gly residues. A compositionally biased stretch (polar residues) spans 211–232 (NETPSPASTHSLSYRTSSASSG).

Homodimer. Post-translationally, autoubiquitinated.

It is found in the chromosome. The catalysed reaction is S-ubiquitinyl-[E2 ubiquitin-conjugating enzyme]-L-cysteine + [acceptor protein]-L-lysine = [E2 ubiquitin-conjugating enzyme]-L-cysteine + N(6)-ubiquitinyl-[acceptor protein]-L-lysine.. It functions in the pathway protein modification; protein ubiquitination. Functionally, ubiquitin E3 ligase that acts as a crucial factor for crossing-over (CO) formation during meiosis. Essential for normal prophase I progression and for ensuring appropriate CO designation in meiosis. Recruits key components of the cross-over machinery either directly ou indirectly, leading to the activation of the MutL-gamma complex. The function of RNF212B in CO designation is dependent on its catalytic activity. The sequence is that of E3 ubiquitin-protein ligase RNF212B (RNF212B) from Homo sapiens (Human).